Consider the following 166-residue polypeptide: Flagellar assembly factor FliW (166 aa).

Belongs to the FliW family. Interacts with translational regulator CsrA and flagellin(s).

It localises to the cytoplasm. Acts as an anti-CsrA protein, binds CsrA and prevents it from repressing translation of its target genes, one of which is flagellin. Binds to flagellin and participates in the assembly of the flagellum. The polypeptide is Flagellar assembly factor FliW (Desulfovibrio desulfuricans (strain ATCC 27774 / DSM 6949 / MB)).